The primary structure comprises 359 residues: N-acetyl-gamma-glutamyl-phosphate reductase (359 aa).

The active site involves cysteine 162.

This sequence belongs to the NAGSA dehydrogenase family. Type 1 subfamily.

The protein resides in the cytoplasm. The catalysed reaction is N-acetyl-L-glutamate 5-semialdehyde + phosphate + NADP(+) = N-acetyl-L-glutamyl 5-phosphate + NADPH + H(+). Its pathway is amino-acid biosynthesis; L-arginine biosynthesis; N(2)-acetyl-L-ornithine from L-glutamate: step 3/4. Functionally, catalyzes the NADPH-dependent reduction of N-acetyl-5-glutamyl phosphate to yield N-acetyl-L-glutamate 5-semialdehyde. The chain is N-acetyl-gamma-glutamyl-phosphate reductase from Prochlorococcus marinus (strain MIT 9211).